Reading from the N-terminus, the 321-residue chain is Arginine-hydroxylase NDUFAF5, mitochondrial (321 aa).

The N-terminal 25 residues, 1-25 (MNVSVKSLRGVSRTWRSFSSRQGMN), are a transit peptide targeting the mitochondrion.

The protein belongs to the methyltransferase superfamily. As to quaternary structure, interacts with NDUFS7.

The protein resides in the mitochondrion inner membrane. Its function is as follows. Arginine hydroxylase that mediates hydroxylation of 'Arg-111' of NDUFS7 and is involved in the assembly of mitochondrial NADH:ubiquinone oxidoreductase complex (complex I, MT-ND1) at early stages. May also have methyltransferase activity. This is Arginine-hydroxylase NDUFAF5, mitochondrial from Danio rerio (Zebrafish).